A 317-amino-acid polypeptide reads, in one-letter code: Serpentine receptor class delta-26 (317 aa).

7 consecutive transmembrane segments (helical) span residues 5–25 (LLHTVLSVTGVTLNAFMMYLA), 38–58 (AIITIKTFTDILTSAMSFFVM), 83–103 (ACYVGHMFMLCFLECNLIWMI), 122–142 (SLVFVALCLSIPSFIHMAAWI), 176–196 (ITLILQLFITSVLVLIAYAWI), 227–247 (FQVFLPTFIFLGFFIFAAMFG), and 258–278 (LVSIAFMFSPICSPFSYILFV).

This sequence belongs to the nematode receptor-like protein srd family.

The protein resides in the membrane. This Caenorhabditis elegans protein is Serpentine receptor class delta-26 (srd-26).